The primary structure comprises 201 residues: 3-isopropylmalate dehydratase small subunit (201 aa).

This sequence belongs to the LeuD family. LeuD type 1 subfamily. In terms of assembly, heterodimer of LeuC and LeuD.

It carries out the reaction (2R,3S)-3-isopropylmalate = (2S)-2-isopropylmalate. It functions in the pathway amino-acid biosynthesis; L-leucine biosynthesis; L-leucine from 3-methyl-2-oxobutanoate: step 2/4. Functionally, catalyzes the isomerization between 2-isopropylmalate and 3-isopropylmalate, via the formation of 2-isopropylmaleate. The chain is 3-isopropylmalate dehydratase small subunit from Shewanella frigidimarina (strain NCIMB 400).